The chain runs to 148 residues: MGRGRVEMKRIENKINRQVTFSKRRAGLLKKAHEISILCDAEVSLIVFSHKGKLFEYSSESCMEKVLERYERYSYAEKQLKAPDSHVNAQTNWSMEYSRLKAKIELWERNQRHYLGEDLESISIKELQNLEQQLDTSLKHIRSRKVCK.

The MADS-box domain maps to 1-61; sequence MGRGRVEMKR…GKLFEYSSES (61 aa). The 59-residue stretch at 90–148 folds into the K-box; partial domain; it reads QTNWSMEYSRLKAKIELWERNQRHYLGEDLESISIKELQNLEQQLDTSLKHIRSRKVCK.

As to quaternary structure, homodimer capable of binding to CArG-box sequences.

Its subcellular location is the nucleus. Probable transcription factor that promotes early floral meristem identity in synergy with APETALA1, FRUITFULL and LEAFY. Is required subsequently for the transition of an inflorescence meristem into a floral meristem. Seems to be partially redundant to the function of APETALA1. The chain is Truncated transcription factor CAULIFLOWER D (CAL-D) from Brassica oleracea var. botrytis (Cauliflower).